A 642-amino-acid polypeptide reads, in one-letter code: 1-deoxy-D-xylulose-5-phosphate synthase 2 (642 aa).

Thiamine diphosphate contacts are provided by residues histidine 73 and 113 to 115 (SHA). Mg(2+) is bound at residue aspartate 144. Thiamine diphosphate contacts are provided by residues 145 to 146 (GA), asparagine 174, tyrosine 285, and glutamate 366. Asparagine 174 is a Mg(2+) binding site.

The protein belongs to the transketolase family. DXPS subfamily. Homodimer. It depends on Mg(2+) as a cofactor. The cofactor is thiamine diphosphate.

It carries out the reaction D-glyceraldehyde 3-phosphate + pyruvate + H(+) = 1-deoxy-D-xylulose 5-phosphate + CO2. Its pathway is metabolic intermediate biosynthesis; 1-deoxy-D-xylulose 5-phosphate biosynthesis; 1-deoxy-D-xylulose 5-phosphate from D-glyceraldehyde 3-phosphate and pyruvate: step 1/1. In terms of biological role, catalyzes the acyloin condensation reaction between C atoms 2 and 3 of pyruvate and glyceraldehyde 3-phosphate to yield 1-deoxy-D-xylulose-5-phosphate (DXP). This is 1-deoxy-D-xylulose-5-phosphate synthase 2 from Streptomyces avermitilis (strain ATCC 31267 / DSM 46492 / JCM 5070 / NBRC 14893 / NCIMB 12804 / NRRL 8165 / MA-4680).